We begin with the raw amino-acid sequence, 153 residues long: Large ribosomal subunit protein bL9 (153 aa).

It belongs to the bacterial ribosomal protein bL9 family.

In terms of biological role, binds to the 23S rRNA. The protein is Large ribosomal subunit protein bL9 of Koribacter versatilis (strain Ellin345).